Reading from the N-terminus, the 467-residue chain is Membrane-bound acylglycerophosphatidylinositol O-acyltransferase mboat7 (467 aa).

Residues 1–5 (MSPDE) are Cytoplasmic-facing. A helical transmembrane segment spans residues 6–22 (LVYLGILAATIPVGFLF). At 23–33 (RYLSPPVKQGA) the chain is on the lumenal side. Residues 34–57 (ALLLGLIISIATCGIHTLHSLCTV) traverse the membrane as a helical segment. The Cytoplasmic portion of the chain corresponds to 58–73 (LGTWIIIKINWRSAPA). A helical transmembrane segment spans residues 74-93 (LSLAWTFLYLLFFRLVTWFG). The Lumenal portion of the chain corresponds to 94–193 (LPQPTPFANA…LPGKEPCLQR (100 aa)). The helical transmembrane segment at 194–211 (LKMVPVYGLLFIAVNSVF) threads the bilayer. Residues 212 to 230 (PLSYVRTEDFLEHNYFYRF) are Cytoplasmic-facing. Residues 231–260 (FYMVAIFFVFRMRFYSAWCGAEAGCISAGL) traverse the membrane as a helical segment. Residues 261 to 421 (GCYPQGALSK…LKASDTISYW (161 aa)) lie on the Lumenal side of the membrane. A glycan (N-linked (GlcNAc...) asparagine) is linked at Asn-316. A helical membrane pass occupies residues 422 to 442 (SSIYFVIHIIAIVCIAVGQFM). Topologically, residues 443–467 (KGGRKREKRERGEGEKEDAVREKAE) are cytoplasmic. A disordered region spans residues 447-467 (KREKRERGEGEKEDAVREKAE). Positions 451–467 (RERGEGEKEDAVREKAE) are enriched in basic and acidic residues.

Belongs to the membrane-bound acyltransferase family.

The protein resides in the endoplasmic reticulum membrane. It carries out the reaction a 1-acyl-sn-glycero-3-phospho-(1D-myo-inositol) + (5Z,8Z,11Z,14Z)-eicosatetraenoyl-CoA = a 1-acyl-2-(5Z,8Z,11Z,14Z-eicosatetraenoyl)-sn-glycero-3-phospho-(1D-myo-inositol) + CoA. The catalysed reaction is (5Z,8Z,11Z,14Z)-eicosatetraenoyl-CoA + 1-hexadecanoyl-sn-glycero-3-phosphocholine = 1-hexadecanoyl-2-(5Z,8Z,11Z,14Z-eicosatetraenoyl)-sn-glycero-3-phosphocholine + CoA. It catalyses the reaction a 1-acyl-sn-glycero-3-phospho-(1D-myo-inositol) + an acyl-CoA = a 1,2-diacyl-sn-glycero-3-phospho-(1D-myo-inositol) + CoA. The enzyme catalyses 1-octadecanoyl-sn-glycero-3-phospho-(1D-myo-inositol) + (5Z,8Z,11Z,14Z)-eicosatetraenoyl-CoA = 1-octadecanoyl-2-(5Z,8Z,11Z,14Z-eicosatetraenoyl)-sn-glycero-3-phospho-(1D-myo-inositol) + CoA. Its pathway is lipid metabolism; phospholipid metabolism. Its function is as follows. Acyltransferase which catalyzes the transfer of an acyl group from an acyl-CoA to a lysophosphatidylinositol (1-acylglycerophosphatidylinositol or LPI) leading to the production of a phosphatidylinositol (1,2-diacyl-sn-glycero-3-phosphoinositol or PI) and participates in the reacylation step of the phospholipid remodeling pathway also known as the Lands cycle. Prefers arachidonoyl-CoA as the acyl donor, thus contributing to the regulation of free levels arachidonic acid in cell. This chain is Membrane-bound acylglycerophosphatidylinositol O-acyltransferase mboat7 (mboat7), found in Danio rerio (Zebrafish).